We begin with the raw amino-acid sequence, 363 residues long: Mitochondrial RNA-splicing protein MRS1 (363 aa).

Its subcellular location is the mitochondrion. Its function is as follows. Function in mitochondrial RNA splicing in the excision of mitochondrial group I introns aI1 and aI5 beta from COX1 and bI3 from COB transcripts and thus would be involved in obtaining the correct structure of the intron, to allow the RNA catalyzed reactions to occur. The sequence is that of Mitochondrial RNA-splicing protein MRS1 (MRS1) from Saccharomyces paradoxus (Yeast).